The sequence spans 79 residues: Sec-independent protein translocase protein TatA (79 aa).

A helical membrane pass occupies residues 1–21; that stretch reads MGGWSSPSHWLIILLIVVLLF. Over residues 49-61 the composition is skewed to basic and acidic residues; the sequence is EVAKNTQKIEENK. Residues 49-79 are disordered; it reads EVAKNTQKIEENKNTTNNTNADASIDETKKA.

This sequence belongs to the TatA/E family. The Tat system comprises two distinct complexes: a TatABC complex, containing multiple copies of TatA, TatB and TatC subunits, and a separate TatA complex, containing only TatA subunits. Substrates initially bind to the TatABC complex, which probably triggers association of the separate TatA complex to form the active translocon.

It is found in the cell inner membrane. Part of the twin-arginine translocation (Tat) system that transports large folded proteins containing a characteristic twin-arginine motif in their signal peptide across membranes. TatA could form the protein-conducting channel of the Tat system. The chain is Sec-independent protein translocase protein TatA from Campylobacter jejuni subsp. doylei (strain ATCC BAA-1458 / RM4099 / 269.97).